The primary structure comprises 89 residues: Cell division topological specificity factor (89 aa).

Belongs to the MinE family.

Its function is as follows. Prevents the cell division inhibition by proteins MinC and MinD at internal division sites while permitting inhibition at polar sites. This ensures cell division at the proper site by restricting the formation of a division septum at the midpoint of the long axis of the cell. In Pectobacterium carotovorum subsp. carotovorum (strain PC1), this protein is Cell division topological specificity factor.